Here is a 368-residue protein sequence, read N- to C-terminus: MEKKKLDLSQYAVRTDLAVEARDLAEEKEASPKKELKGFTVKEYEKDGIKIQTMDIDEEGAKLSGKKAGRYLTFETQGIRQQDSVLQEKVVDVFAKEFSSFLDYLGIPRDASCLIVGLGNWNVTPDSLGPLVTENLLVTRHLFQLQPENVEEGYRPVSALSPGVMGLTGIETSDIIQGVIDRSKPDFVIAIDALASRGIERVNSTIQISDSGIHPGSGVGNKRKELSKDTLGIPVIAIGVPTVVDAVTITSDTIDYMLKHFGREMRDDSPSRSLVPAGMSFGKRKVLTEEDLPDEEHRKSFLGIVGGLAEDEKRQLIHEVLAPLGHNLMVTPKEVDTFIDDMANVIANGLNTALHENVSQDNKGMYNH.

Residues M1–D16 constitute a propeptide that is removed on maturation.

Belongs to the peptidase A25 family. Homotetramer. In terms of processing, autoproteolytically processed. The inactive tetrameric zymogen termed p46 autoprocesses to a smaller form termed p41, which is active only during spore germination.

The enzyme catalyses Endopeptidase action with P4 Glu or Asp, P1 preferably Glu &gt; Asp, P1' hydrophobic and P2' Ala.. Initiates the rapid degradation of small, acid-soluble proteins during spore germination. This chain is Germination protease, found in Bacillus licheniformis (strain ATCC 14580 / DSM 13 / JCM 2505 / CCUG 7422 / NBRC 12200 / NCIMB 9375 / NCTC 10341 / NRRL NRS-1264 / Gibson 46).